Reading from the N-terminus, the 251-residue chain is Segregation and condensation protein A (251 aa).

The protein belongs to the ScpA family. Component of a cohesin-like complex composed of ScpA, ScpB and the Smc homodimer, in which ScpA and ScpB bind to the head domain of Smc. The presence of the three proteins is required for the association of the complex with DNA.

It localises to the cytoplasm. In terms of biological role, participates in chromosomal partition during cell division. May act via the formation of a condensin-like complex containing Smc and ScpB that pull DNA away from mid-cell into both cell halves. This chain is Segregation and condensation protein A, found in Bacillus licheniformis (strain ATCC 14580 / DSM 13 / JCM 2505 / CCUG 7422 / NBRC 12200 / NCIMB 9375 / NCTC 10341 / NRRL NRS-1264 / Gibson 46).